Here is a 429-residue protein sequence, read N- to C-terminus: L-dopachrome tautomerase yellow-f (429 aa).

A signal peptide spans 1-23; it reads MLSLDVLLLCAISGFQLLISADG. Residues N133 and N372 are each glycosylated (N-linked (GlcNAc...) asparagine).

It belongs to the major royal jelly protein family.

The protein resides in the secreted. It catalyses the reaction L-dopachrome = 5,6-dihydroxyindole-2-carboxylate. It participates in pigment biosynthesis; melanin biosynthesis. Functionally, tautomerization of L-dopachrome with decarboxylation to give 5,6-dihydroxyindole (DHI). Also catalyzes the tautomerization of the methyl ester of L-dopachrome and dopamine chrome. May play a role in melanization reactions during late pupal and adult stages. May play a role in melanization reactions during larval and early pupal stages. This Drosophila melanogaster (Fruit fly) protein is L-dopachrome tautomerase yellow-f.